Reading from the N-terminus, the 330-residue chain is Aspartate--ammonia ligase (330 aa).

This sequence belongs to the class-II aminoacyl-tRNA synthetase family. AsnA subfamily.

It is found in the cytoplasm. It carries out the reaction L-aspartate + NH4(+) + ATP = L-asparagine + AMP + diphosphate + H(+). It functions in the pathway amino-acid biosynthesis; L-asparagine biosynthesis; L-asparagine from L-aspartate (ammonia route): step 1/1. This Streptococcus pyogenes serotype M6 (strain ATCC BAA-946 / MGAS10394) protein is Aspartate--ammonia ligase.